The following is a 407-amino-acid chain: Ameloblastin (407 aa).

An N-terminal signal peptide occupies residues 1–26 (MSASKIPLFKMKGLILFLSLVKMSLA). P42 carries the hydroxyproline modification. Phosphoserine is present on S48. Disordered stretches follow at residues 124–143 (GVQV…PGQL) and 259–304 (QNSP…ENPA).

Belongs to the ameloblastin family. As to expression, ameloblast-specific.

The protein resides in the secreted. The protein localises to the extracellular space. It is found in the extracellular matrix. Involved in the mineralization and structural organization of enamel. This chain is Ameloblastin (Ambn), found in Mus musculus (Mouse).